We begin with the raw amino-acid sequence, 98 residues long: A-type ATP synthase subunit F (98 aa).

It belongs to the V-ATPase F subunit family. In terms of assembly, the A-type ATPase is composed of subunits A(3), B(3), C, D, E(1 or 2), F, H(2), I and K(x).

The protein resides in the cell membrane. Functionally, component of the A-type ATP synthase that produces ATP from ADP in the presence of a proton gradient across the membrane. The protein is A-type ATP synthase subunit F of Methanocaldococcus jannaschii (strain ATCC 43067 / DSM 2661 / JAL-1 / JCM 10045 / NBRC 100440) (Methanococcus jannaschii).